The sequence spans 309 residues: Homoserine kinase (309 aa).

91–101 (PIGSGLGSSAC) contacts ATP.

The protein belongs to the GHMP kinase family. Homoserine kinase subfamily.

The protein localises to the cytoplasm. The enzyme catalyses L-homoserine + ATP = O-phospho-L-homoserine + ADP + H(+). It participates in amino-acid biosynthesis; L-threonine biosynthesis; L-threonine from L-aspartate: step 4/5. Catalyzes the ATP-dependent phosphorylation of L-homoserine to L-homoserine phosphate. This chain is Homoserine kinase, found in Edwardsiella ictaluri (strain 93-146).